The sequence spans 406 residues: Tyrosine--tRNA ligase (406 aa).

Tyr35 contacts L-tyrosine. Residues 40 to 49 (ATSTSLHIGH) carry the 'HIGH' region motif. L-tyrosine contacts are provided by Tyr166 and Gln170. Residues 226–230 (KMGKS) carry the 'KMSKS' region motif. Residue Lys229 coordinates ATP. Residues 341 to 405 (ILLVDLMVSS…IGKKKILRII (65 aa)) form the S4 RNA-binding domain.

Belongs to the class-I aminoacyl-tRNA synthetase family. TyrS type 1 subfamily. As to quaternary structure, homodimer.

Its subcellular location is the cytoplasm. It carries out the reaction tRNA(Tyr) + L-tyrosine + ATP = L-tyrosyl-tRNA(Tyr) + AMP + diphosphate + H(+). Functionally, catalyzes the attachment of tyrosine to tRNA(Tyr) in a two-step reaction: tyrosine is first activated by ATP to form Tyr-AMP and then transferred to the acceptor end of tRNA(Tyr). This Borrelia hermsii (strain HS1 / DAH) protein is Tyrosine--tRNA ligase.